The sequence spans 286 residues: 4-hydroxybenzoate octaprenyltransferase (286 aa).

7 consecutive transmembrane segments (helical) span residues 20–40 (IGILLLLWPTLWGLWLAADGM), 43–63 (PMILVIFVLGTILMRSAGCAI), 83–103 (LATGIISSREALLVAAGLSLC), 135–155 (FFAMPQAYLGIAFSFGIPMAF), 160–180 (GTVPPLAWLLVLANLFWVIAY), 209–229 (VAGILLCHITFLSILTYAGIL), and 234–254 (IWFYGALLVALGLVIVQYTMI).

The protein belongs to the UbiA prenyltransferase family. Requires Mg(2+) as cofactor.

It is found in the cell inner membrane. It catalyses the reaction all-trans-octaprenyl diphosphate + 4-hydroxybenzoate = 4-hydroxy-3-(all-trans-octaprenyl)benzoate + diphosphate. It functions in the pathway cofactor biosynthesis; ubiquinone biosynthesis. Functionally, catalyzes the prenylation of para-hydroxybenzoate (PHB) with an all-trans polyprenyl group. Mediates the second step in the final reaction sequence of ubiquinone-8 (UQ-8) biosynthesis, which is the condensation of the polyisoprenoid side chain with PHB, generating the first membrane-bound Q intermediate 3-octaprenyl-4-hydroxybenzoate. This chain is 4-hydroxybenzoate octaprenyltransferase, found in Nitrosomonas eutropha (strain DSM 101675 / C91 / Nm57).